The sequence spans 85 residues: Putative membrane protein insertion efficiency factor (85 aa).

It belongs to the UPF0161 family.

Its subcellular location is the cell membrane. Could be involved in insertion of integral membrane proteins into the membrane. The chain is Putative membrane protein insertion efficiency factor from Leifsonia xyli subsp. xyli (strain CTCB07).